We begin with the raw amino-acid sequence, 29 residues long: Brevinin-2Rd (29 aa).

A disulfide bond links Cys-23 and Cys-29.

As to expression, expressed by the skin glands.

It is found in the secreted. Its function is as follows. Antimicrobial peptide. This is Brevinin-2Rd from Pelophylax ridibundus (Marsh frog).